The sequence spans 331 residues: DNA-directed RNA polymerase subunit alpha (331 aa).

The tract at residues 1–226 (MLIAQRPTLT…ELFGLCRELN (226 aa)) is alpha N-terminal domain (alpha-NTD). The interval 243-331 (TNPEMAVPIE…GGTFFSPEDE (89 aa)) is alpha C-terminal domain (alpha-CTD).

It belongs to the RNA polymerase alpha chain family. Homodimer. The RNAP catalytic core consists of 2 alpha, 1 beta, 1 beta' and 1 omega subunit. When a sigma factor is associated with the core the holoenzyme is formed, which can initiate transcription.

The enzyme catalyses RNA(n) + a ribonucleoside 5'-triphosphate = RNA(n+1) + diphosphate. Functionally, DNA-dependent RNA polymerase catalyzes the transcription of DNA into RNA using the four ribonucleoside triphosphates as substrates. This is DNA-directed RNA polymerase subunit alpha from Bifidobacterium longum (strain NCC 2705).